Reading from the N-terminus, the 167-residue chain is U-scoloptoxin(08)-Er5b (167 aa).

The first 22 residues, 1–22, serve as a signal peptide directing secretion; it reads MKTNCEFPLLCLLIVLVANVEG. Positions 23–94 are excised as a propeptide; it reads EVEDTGLKMV…KRLWRNWERR (72 aa). RLWRNWE repeat units follow at residues 34–40, 61–67, and 86–92; these read RLWRNWE. Gln95 is subject to Pyrrolidone carboxylic acid. Residues 107–113 form an RLWRNWE 4; approximate repeat; sequence ELWRNWE. A propeptide spanning residues 112–118 is cleaved from the precursor; it reads WEDLKRR. Gln119 carries the pyrrolidone carboxylic acid modification. The stretch at 134–140 is one RLWRNWE 5 repeat; that stretch reads RLWRNWE. Residues 139–167 constitute a propeptide that is removed on maturation; that stretch reads WEDNHATLRKRSADSLSRQKRLGKERGKE. Residues 147–167 are disordered; it reads RKRSADSLSRQKRLGKERGKE.

It belongs to the scoloptoxin-08 family. In terms of tissue distribution, expressed by the venom gland.

It localises to the secreted. In Ethmostigmus rubripes (Giant centipede), this protein is U-scoloptoxin(08)-Er5b.